A 607-amino-acid chain; its full sequence is Guanine nucleotide-binding protein-like 1 (607 aa).

Basic residues predominate over residues 1 to 14 (MPRKKPFSVKQKKK). Positions 1–81 (MPRKKPFSVK…GPRGYDPNRY (81 aa)) are disordered. Over residues 15-26 (QLQDKRERKRGL) the composition is skewed to basic and acidic residues. A phosphoserine mark is found at Ser-32, Ser-33, and Ser-34. Residues Thr-48 and Thr-50 each carry the phosphothreonine modification. Ser-51 and Ser-68 each carry phosphoserine. The CP-type G domain maps to 178–418 (WRQLWRVLEM…LCDCPGLIFP (241 aa)). Position 225-228 (225-228 (NKVD)) interacts with GTP. A Phosphoserine modification is found at Ser-324. GTP contacts are provided by residues 367-374 (GFPNVGKS) and 411-415 (DCPGL). The disordered stretch occupies residues 547–607 (GPAGDEEEEE…PYALLGEDEC (61 aa)). Residues 550–584 (GDEEEEEEEELSSSCEEEGEEDRDADEEGEGDEET) show a composition bias toward acidic residues. Ser-561, Ser-562, and Ser-563 each carry phosphoserine.

Belongs to the TRAFAC class YlqF/YawG GTPase family.

Functionally, possible regulatory or functional link with the histocompatibility cluster. This is Guanine nucleotide-binding protein-like 1 (GNL1) from Pan troglodytes (Chimpanzee).